Here is a 22-residue protein sequence, read N- to C-terminus: Zinc metalloproteinase oxiagin (22 aa).

The region spanning 14–22 (CYIEFYVVV) is the Peptidase M12B domain.

It belongs to the venom metalloproteinase (M12B) family. P-III subfamily. P-IIId sub-subfamily. Heterotrimer; disulfide-linked. The heterotrimer consists of 1 metalloproteinase chain and 2 lectin chains. Requires Zn(2+) as cofactor. N-glycosylated. In terms of tissue distribution, expressed by the venom gland.

It localises to the secreted. In terms of biological role, snake venom metalloproteinase that inhibits the classical complement pathway dose-dependently. It acts by binding to carbohydrates of IgG within the antibody-sensitized sheep erythrocytes (EA) complex, and thus prevents interaction of component C2 with immobilized C4b. Also induces cation-independent hemagglutination that can be prevented by D-galactose pretreatment. The chain is Zinc metalloproteinase oxiagin from Naja oxiana (Central Asian cobra).